The following is a 362-amino-acid chain: Protein mom-2 (362 aa).

The N-terminal stretch at 1 to 24 (MHINTPVLLAIIYFLVFAPKSADA) is a signal peptide. 5 disulfide bridges follow: cysteine 80–cysteine 91, cysteine 129–cysteine 137, cysteine 139–cysteine 167, cysteine 217–cysteine 231, and cysteine 219–cysteine 226. The N-linked (GlcNAc...) asparagine glycan is linked to asparagine 90. Serine 223 carries the O-palmitoleoyl serine; by mom-1 lipid modification. The interval 263–282 (TVRSSPSAGSSGRSERFARN) is disordered. The span at 265–274 (RSSPSAGSSG) shows a compositional bias: low complexity. Cystine bridges form between cysteine 304–cysteine 322, cysteine 313–cysteine 317, cysteine 321–cysteine 361, cysteine 337–cysteine 352, cysteine 339–cysteine 349, and cysteine 344–cysteine 345.

This sequence belongs to the Wnt family. Post-translationally, palmitoleoylation is required for efficient binding to frizzled receptors. Depalmitoleoylation leads to Wnt signaling pathway inhibition. In terms of tissue distribution, expressed by anchor cell and vulva precursor cell descendants P5.ppa, P5.ppp, P7.paa and P7.pap. Expressed in the tail and weakly expressed in the vulva and body wall muscles.

It is found in the secreted. The protein localises to the extracellular space. It localises to the extracellular matrix. Functionally, ligand for members of the frizzled family of seven transmembrane receptors. Required in embryonic development for endoderm specification and the correct positioning and orientation of the mitotic spindles and division planes in blastomere cells. Involved in cleavage axis determination. Binds to receptor tyrosine kinase cam-1. Together with wnt ligand lin-44, plays a role in controlling vulva precursor cell P7.p lineage orientation during vulva development, probably by acting as a ligand for tyrosine kinase receptor lin-18. May act redundantly with other Wnt ligands such as cwn-1 and cwn-2 to control seam cell polarity. The sequence is that of Protein mom-2 (mom-2) from Caenorhabditis elegans.